Reading from the N-terminus, the 440-residue chain is Ran-specific GTPase-activating protein 30 (440 aa).

The RanBD1 domain occupies 1–314; the sequence is MDEILAKAGS…LVLKIDRSDD (314 aa). T272 is subject to Phosphothreonine. Residues 341–371 show a composition bias toward acidic residues; that stretch reads IEEDEEEDEEEDEEEGKDGEERKEEEEEENK. Residues 341–375 form a disordered region; the sequence is IEEDEEEDEEEDEEEGKDGEERKEEEEEENKLEDK.

In terms of assembly, interacts with GSP1.

The protein resides in the cytoplasm. It is found in the nucleus. Important for the export of protein containing nuclear export signal (NES) out of the nucleus. Stimulates the GTPase activity of GSP1. In Saccharomyces cerevisiae (strain ATCC 204508 / S288c) (Baker's yeast), this protein is Ran-specific GTPase-activating protein 30 (YRB30).